A 536-amino-acid polypeptide reads, in one-letter code: MFS-type efflux pump MFS1 (536 aa).

Transmembrane regions (helical) follow at residues 30 to 50, 80 to 100, and 102 to 122; these read VTGL…LLVA, YLLT…FFPV, and WVFL…GAAP. An N-linked (GlcNAc...) asparagine glycan is attached at Asn123. 3 consecutive transmembrane segments (helical) span residues 133–153, 163–183, and 191–211; these read VAGI…AYSI, GAIG…GGAF, and WCFY…LIFL. Asn221 carries an N-linked (GlcNAc...) asparagine glycan. The next 8 helical transmembrane spans lie at 234–254, 264–284, 306–326, 342–362, 366–386, 400–420, 426–446, and 503–523; these read IGTA…QWGG, IIAL…FQIR, FFLF…PIWF, IPMV…VTAI, APLY…LTTF, IIFG…AQAV, VAVG…LFVS, and TWYV…GMEW.

This sequence belongs to the major facilitator superfamily. TCR/Tet family.

The protein localises to the cell membrane. MFS-type efflux pump involved in the modulation susceptibility to azoles, including fluconazole, itraconazole, ketoconazole, miconazole and voriconazole. Confers also increased resistance chloramphenicol and thiamphenicol, suggesting that it acts as a pleiotropic drug transporter with a broad substrate spectrum. Finally, increases the tolerance to cycloheximide when expressed in S.cerevisiae, but not in dermatophyte species. This Trichophyton rubrum (strain ATCC MYA-4607 / CBS 118892) (Athlete's foot fungus) protein is MFS-type efflux pump MFS1.